The primary structure comprises 490 residues: UDP-glucosyl transferase 73M2 (490 aa).

The active-site Proton acceptor is His20. Asp124 (charge relay) is an active-site residue. Residues Ser297, Trp353, Ala354, His371, Asn375, Ser376, Glu379, and Tyr393 each coordinate UDP.

This sequence belongs to the UDP-glycosyltransferase family. In terms of tissue distribution, mainly expressed in flowers, flower buds and young leaves, and, to a lesser extent, in old leaves, stems and roots.

Its pathway is secondary metabolite biosynthesis; terpenoid biosynthesis. Its function is as follows. Component of the oleanane-type triterpene saponins (e.g. saponarioside A and saponarioside B) biosynthetic pathway, leading to the production of natural products with detergent properties used as traditional sources of soap. A glycosyltransferase that mediates the conversion of QA-triFRX to QA-triFRXX via the elongation of the C-28 sugar chain with a D-xylose. In Saponaria officinalis (Common soapwort), this protein is UDP-glucosyl transferase 73M2.